The chain runs to 378 residues: Protein FAM185A (378 aa).

This Mus musculus (Mouse) protein is Protein FAM185A (Fam185a).